A 156-amino-acid polypeptide reads, in one-letter code: Cyanate hydratase (156 aa).

Residues Arg-96, Glu-99, and Ser-122 contribute to the active site.

The protein belongs to the cyanase family.

It carries out the reaction cyanate + hydrogencarbonate + 3 H(+) = NH4(+) + 2 CO2. Its function is as follows. Catalyzes the reaction of cyanate with bicarbonate to produce ammonia and carbon dioxide. The polypeptide is Cyanate hydratase (Photorhabdus laumondii subsp. laumondii (strain DSM 15139 / CIP 105565 / TT01) (Photorhabdus luminescens subsp. laumondii)).